A 146-amino-acid polypeptide reads, in one-letter code: ATP synthase F(0) complex subunit C2, mitochondrial (146 aa).

A mitochondrion-targeting transit peptide spans 1 to 71 (MYACSKFVST…RSFQTSAISR (71 aa)). Residues 87-107 (VGVAGSGAGIGTVFGSLIIGY) form a helical membrane-spanning segment. N6,N6,N6-trimethyllysine is present on Lys114. The chain crosses the membrane as a helical span at residues 122–142 (ILGFALSEAMGLFCLMVAFLI).

Belongs to the ATPase C chain family. As to quaternary structure, F-type ATPases have 2 components, CF(1) - the catalytic core - and CF(0) - the membrane proton channel. CF(1) has five subunits: alpha(3), beta(3), gamma(1), delta(1), epsilon(1). CF(0) has three main subunits: a, b and c. Interacts with DNAJC30; interaction is direct. Post-translationally, trimethylated by ATPSCKMT at Lys-114. Methylation is required for proper incorporation of the C subunit into the ATP synthase complex and mitochondrial respiration.

The protein resides in the mitochondrion membrane. In terms of biological role, mitochondrial membrane ATP synthase (F(1)F(0) ATP synthase or Complex V) produces ATP from ADP in the presence of a proton gradient across the membrane which is generated by electron transport complexes of the respiratory chain. F-type ATPases consist of two structural domains, F(1) - containing the extramembraneous catalytic core and F(0) - containing the membrane proton channel, linked together by a central stalk and a peripheral stalk. During catalysis, ATP synthesis in the catalytic domain of F(1) is coupled via a rotary mechanism of the central stalk subunits to proton translocation. Part of the complex F(0) domain. A homomeric c-ring of probably 10 subunits is part of the complex rotary element. This Mus musculus (Mouse) protein is ATP synthase F(0) complex subunit C2, mitochondrial.